The primary structure comprises 299 residues: Small ribosomal subunit protein uS2 (299 aa).

Positions 259-291 are enriched in low complexity; the sequence is AAASAAGPTSWEADGADWAASSAPAAAGESWAE. Residues 259 to 299 are disordered; that stretch reads AAASAAGPTSWEADGADWAASSAPAAAGESWAETQPAEGKW.

This sequence belongs to the universal ribosomal protein uS2 family. In terms of assembly, component of the small ribosomal subunit. Mature ribosomes consist of a small (40S) and a large (60S) subunit. The 40S subunit contains about 33 different proteins and 1 molecule of RNA (18S). The 60S subunit contains about 49 different proteins and 3 molecules of RNA (25S, 5.8S and 5S). Interacts with rps21.

Its subcellular location is the cytoplasm. Required for the assembly and/or stability of the 40S ribosomal subunit. Required for the processing of the 20S rRNA-precursor to mature 18S rRNA in a late step of the maturation of 40S ribosomal subunits. This chain is Small ribosomal subunit protein uS2 (rps0), found in Aspergillus flavus (strain ATCC 200026 / FGSC A1120 / IAM 13836 / NRRL 3357 / JCM 12722 / SRRC 167).